The sequence spans 677 residues: Methionine--tRNA ligase (677 aa).

The 'HIGH' region motif lies at 15 to 25; sequence PYANGSIHLGH. Residues Cys146, Cys149, Cys159, and Cys162 each contribute to the Zn(2+) site. A 'KMSKS' region motif is present at residues 333–337; it reads KMSKS. An ATP-binding site is contributed by Lys336. Positions 575-677 constitute a tRNA-binding domain; that stretch reads DFAKIDLRVA…DGAKPGQQVK (103 aa).

This sequence belongs to the class-I aminoacyl-tRNA synthetase family. MetG type 1 subfamily. As to quaternary structure, homodimer. Requires Zn(2+) as cofactor.

Its subcellular location is the cytoplasm. The enzyme catalyses tRNA(Met) + L-methionine + ATP = L-methionyl-tRNA(Met) + AMP + diphosphate. Its function is as follows. Is required not only for elongation of protein synthesis but also for the initiation of all mRNA translation through initiator tRNA(fMet) aminoacylation. The protein is Methionine--tRNA ligase of Salmonella paratyphi A (strain AKU_12601).